Here is a 510-residue protein sequence, read N- to C-terminus: Alpha-L-arabinofuranosidase B (510 aa).

The N-terminal stretch at 1–24 is a signal peptide; sequence MTMSRSSRSSVLALALATGSLVAA. The catalytic stretch occupies residues 25-342; it reads GPCDIYSSGG…ADIVAAKYAT (318 aa). Intrachain disulfides connect cysteine 27–cysteine 37, cysteine 87–cysteine 92, and cysteine 182–cysteine 183. The N-linked (GlcNAc...) asparagine glycan is linked to asparagine 89. Aspartate 225 contacts substrate. The Nucleophile role is filled by glutamate 227. Substrate-binding residues include asparagine 228 and glycine 303. Aspartate 304 (proton donor) is an active-site residue. An ABD region spans residues 343–510; the sequence is TSLISGPALT…VSWVVADGFA (168 aa). The cysteines at positions 412 and 450 are disulfide-linked. Substrate contacts are provided by histidine 427, asparagine 429, phenylalanine 430, aspartate 446, histidine 475, glutamate 477, leucine 480, and aspartate 500.

It belongs to the glycosyl hydrolase 54 family.

It is found in the secreted. It carries out the reaction Hydrolysis of terminal non-reducing alpha-L-arabinofuranoside residues in alpha-L-arabinosides.. It participates in glycan metabolism; L-arabinan degradation. Functionally, alpha-L-arabinofuranosidase involved in the degradation of arabinoxylan, a major component of plant hemicellulose. Able to hydrolyze 1,5-, 1,3- and 1,2-alpha-linkages not only in L-arabinofuranosyl oligosaccharides, but also in polysaccharides containing terminal non-reducing L-arabinofuranoses in side chains, like L-arabinan, arabinogalactan and arabinoxylan. This chain is Alpha-L-arabinofuranosidase B (abfB), found in Emericella nidulans (strain FGSC A4 / ATCC 38163 / CBS 112.46 / NRRL 194 / M139) (Aspergillus nidulans).